The sequence spans 214 residues: Adenylate kinase (214 aa).

10–15 serves as a coordination point for ATP; sequence GAGKGT. An NMP region spans residues 30-59; that stretch reads STGDMFRAAVKNETPLGLEAKSYMDKGHLV. AMP is bound by residues Thr-31, Arg-36, 57 to 59, 85 to 88, and Gln-92; these read HLV and GFPR. Residues 126 to 163 are LID; that stretch reads GRWICPVCGASYHTMFNPPKEAGVCDKDGGKLYQREDD. Arg-127 provides a ligand contact to ATP. Residues Cys-130 and Cys-133 each coordinate Zn(2+). Position 136–137 (136–137) interacts with ATP; it reads SY. Cys-150 and Asp-153 together coordinate Zn(2+). Residues Arg-160 and Arg-171 each contribute to the AMP site. Gln-199 serves as a coordination point for ATP.

It belongs to the adenylate kinase family. In terms of assembly, monomer.

Its subcellular location is the cytoplasm. The enzyme catalyses AMP + ATP = 2 ADP. Its pathway is purine metabolism; AMP biosynthesis via salvage pathway; AMP from ADP: step 1/1. Catalyzes the reversible transfer of the terminal phosphate group between ATP and AMP. Plays an important role in cellular energy homeostasis and in adenine nucleotide metabolism. The chain is Adenylate kinase from Brevibacillus brevis (strain 47 / JCM 6285 / NBRC 100599).